A 330-amino-acid polypeptide reads, in one-letter code: Putative [LysW]-L-2-aminoadipate/[LysW]-L-glutamate phosphate reductase (330 aa).

Residue 10-13 (SGYI) coordinates NADP(+). Cys142 is a catalytic residue. Asn297 is a binding site for NADP(+).

The protein belongs to the NAGSA dehydrogenase family. Type 1 subfamily. LysY sub-subfamily.

The protein resides in the cytoplasm. It catalyses the reaction [amino-group carrier protein]-C-terminal-N-(1-carboxy-5-oxopentan-1-yl)-L-glutamine + phosphate + NADP(+) = [amino-group carrier protein]-C-terminal-N-(1-carboxy-5-phosphooxy-5-oxopentan-1-yl)-L-glutamine + NADPH + H(+). The enzyme catalyses [amino-group carrier protein]-C-terminal-gamma-(L-glutamyl-5-semialdehyde)-L-glutamate + phosphate + NADP(+) = [amino-group carrier protein]-C-terminal-gamma-(5-phospho-L-glutamyl)-L-glutamate + NADPH + H(+). It participates in amino-acid biosynthesis; L-lysine biosynthesis via AAA pathway; L-lysine from L-alpha-aminoadipate (Thermus route): step 3/5. The protein operates within amino-acid biosynthesis; L-arginine biosynthesis. Functionally, involved in both the arginine and lysine biosynthetic pathways. In Pyrococcus horikoshii (strain ATCC 700860 / DSM 12428 / JCM 9974 / NBRC 100139 / OT-3), this protein is Putative [LysW]-L-2-aminoadipate/[LysW]-L-glutamate phosphate reductase.